We begin with the raw amino-acid sequence, 319 residues long: Acetyl-coenzyme A carboxylase carboxyl transferase subunit alpha (319 aa).

Residues 35–296 (NIDEEVHRLR…KAQLLADLAD (262 aa)) enclose the CoA carboxyltransferase C-terminal domain.

It belongs to the AccA family. In terms of assembly, acetyl-CoA carboxylase is a heterohexamer composed of biotin carboxyl carrier protein (AccB), biotin carboxylase (AccC) and two subunits each of ACCase subunit alpha (AccA) and ACCase subunit beta (AccD).

It is found in the cytoplasm. It carries out the reaction N(6)-carboxybiotinyl-L-lysyl-[protein] + acetyl-CoA = N(6)-biotinyl-L-lysyl-[protein] + malonyl-CoA. The protein operates within lipid metabolism; malonyl-CoA biosynthesis; malonyl-CoA from acetyl-CoA: step 1/1. Its function is as follows. Component of the acetyl coenzyme A carboxylase (ACC) complex. First, biotin carboxylase catalyzes the carboxylation of biotin on its carrier protein (BCCP) and then the CO(2) group is transferred by the carboxyltransferase to acetyl-CoA to form malonyl-CoA. This is Acetyl-coenzyme A carboxylase carboxyl transferase subunit alpha from Escherichia coli O127:H6 (strain E2348/69 / EPEC).